Reading from the N-terminus, the 321-residue chain is uncharacterized protein (321 aa).

The protein belongs to the NAD(P)-dependent epimerase/dehydratase family.

This is an uncharacterized protein from Staphylococcus aureus (strain MRSA252).